We begin with the raw amino-acid sequence, 441 residues long: Chitinase-like protein Idgf3 (441 aa).

The signal sequence occupies residues 1-23; the sequence is MTGSLWLSLALSLAVLAQFKVSA. Residues 25-441 enclose the GH18 domain; that stretch reads PNLVCFYDSQ…MLRAIKYRLL (417 aa). Cysteine 29 and cysteine 56 form a disulfide bridge. N-linked (GlcNAc...) asparagine glycosylation is present at asparagine 221. Positions 307-331 are disordered; the sequence is KDSGDSGMPVVPSTQGPAPAGPQSK. Cysteines 342 and 425 form a disulfide.

Belongs to the glycosyl hydrolase 18 family. IDGF subfamily. In terms of processing, glycosylated. As to expression, primarily expressed in yolk cells and fat body. In larvae, it is expressed in small and large salivary gland cells, and weakly expressed in imaginal disks. Less expressed than Idgf2 and Idgf4.

The protein resides in the secreted. Cooperates with insulin-like peptides to stimulate the proliferation, polarization and motility of imaginal disk cells. May act by stabilizing the binding of insulin-like peptides to its receptor through a simultaneous interaction with both molecules to form a multiprotein signaling complex. The polypeptide is Chitinase-like protein Idgf3 (Idgf3) (Drosophila melanogaster (Fruit fly)).